The following is a 668-amino-acid chain: UvrABC system protein B (668 aa).

In terms of domain architecture, Helicase ATP-binding spans 31–416 (QGITDGVPAQ…RGHIIEQIIR (386 aa)). 44–51 (GTTGSGKT) is a binding site for ATP. The Beta-hairpin motif lies at 97 to 120 (YYDYYQPEAYIARSDTYIEKSLLI). A Helicase C-terminal domain is found at 433 to 596 (QIDDLLEEIR…ITPQPIIKPI (164 aa)). Residues 621 to 656 (EASIKTYEEAMYQAAQEFQFDEAAKYRDLMNAAKKQ) form the UVR domain.

The protein belongs to the UvrB family. Forms a heterotetramer with UvrA during the search for lesions. Interacts with UvrC in an incision complex.

The protein localises to the cytoplasm. Its function is as follows. The UvrABC repair system catalyzes the recognition and processing of DNA lesions. A damage recognition complex composed of 2 UvrA and 2 UvrB subunits scans DNA for abnormalities. Upon binding of the UvrA(2)B(2) complex to a putative damaged site, the DNA wraps around one UvrB monomer. DNA wrap is dependent on ATP binding by UvrB and probably causes local melting of the DNA helix, facilitating insertion of UvrB beta-hairpin between the DNA strands. Then UvrB probes one DNA strand for the presence of a lesion. If a lesion is found the UvrA subunits dissociate and the UvrB-DNA preincision complex is formed. This complex is subsequently bound by UvrC and the second UvrB is released. If no lesion is found, the DNA wraps around the other UvrB subunit that will check the other stand for damage. The protein is UvrABC system protein B of Chlamydia trachomatis serovar D (strain ATCC VR-885 / DSM 19411 / UW-3/Cx).